Here is a 599-residue protein sequence, read N- to C-terminus: Sulfite reductase [NADPH] flavoprotein alpha-component (599 aa).

The Flavodoxin-like domain occupies 64–202 (ITIISASQTG…AASEWRARVV (139 aa)). FMN contacts are provided by residues 70–75 (SQTGNA), 117–120 (STQG), and 153–162 (LGDSSYEFFC). The FAD-binding FR-type domain occupies 234 to 448 (DAPLVASLSV…IEHNDNFRLP (215 aa)). FAD-binding positions include Thr322, Ala356, 386–389 (RLYS), 404–406 (TVG), Tyr410, and 419–422 (GGAS). Residues 519–520 (SR), 525–529 (KVYVQ), and Asp561 each bind NADP(+). Residue Tyr599 participates in FAD binding.

The protein belongs to the NADPH-dependent sulphite reductase flavoprotein subunit CysJ family. It in the N-terminal section; belongs to the flavodoxin family. This sequence in the C-terminal section; belongs to the flavoprotein pyridine nucleotide cytochrome reductase family. In terms of assembly, alpha(8)-beta(8). The alpha component is a flavoprotein, the beta component is a hemoprotein. It depends on FAD as a cofactor. FMN is required as a cofactor.

The enzyme catalyses hydrogen sulfide + 3 NADP(+) + 3 H2O = sulfite + 3 NADPH + 4 H(+). Its pathway is sulfur metabolism; hydrogen sulfide biosynthesis; hydrogen sulfide from sulfite (NADPH route): step 1/1. Functionally, component of the sulfite reductase complex that catalyzes the 6-electron reduction of sulfite to sulfide. This is one of several activities required for the biosynthesis of L-cysteine from sulfate. The flavoprotein component catalyzes the electron flow from NADPH -&gt; FAD -&gt; FMN to the hemoprotein component. This chain is Sulfite reductase [NADPH] flavoprotein alpha-component, found in Shigella dysenteriae serotype 1 (strain Sd197).